Reading from the N-terminus, the 105-residue chain is MRLYTEYIPNKNKLINQQQYHSDLQDLLHQWILQLLQLDVLPLSNRKYQSSRCHPKSVGEYLIVVRAIDALGNSQPLTSRRNQVSRAMTFVQNSLNEENLHPNID.

This is an uncharacterized protein from Bacillus subtilis (strain 168).